Consider the following 185-residue polypeptide: Tetratricopeptide repeat protein 36 homolog (185 aa).

3 TPR repeats span residues 53–86 (SRELELQGVLLTEKGSFDEALKVFQLALNQAQRA), 88–119 (VLNNRAQTLRLAKRDGEALDDLNKALEMASDQ), and 125–158 (CHAHCQRGVLYRKLDNLDAARSDFEAAAQLGSKF).

This sequence belongs to the TTC36 family.

The polypeptide is Tetratricopeptide repeat protein 36 homolog (Drosophila pseudoobscura pseudoobscura (Fruit fly)).